The primary structure comprises 417 residues: Indole-3-pyruvate monooxygenase YUCCA6 (417 aa).

36 to 41 contacts FAD; the sequence is GAGPSG. 204–209 contributes to the NADP(+) binding site; it reads GCGNSG.

Belongs to the FMO family. FAD serves as cofactor. Highly expressed in roots but modestly expressed in the cauline leaves and flowers. Expressed in anthers.

The protein resides in the cytoplasm. The catalysed reaction is indole-3-pyruvate + NADPH + O2 + H(+) = (indol-3-yl)acetate + CO2 + NADP(+) + H2O. It functions in the pathway plant hormone metabolism; auxin biosynthesis. Functionally, involved in auxin biosynthesis via the indole-3-pyruvic acid (IPA) pathway. Also able to convert in vitro phenyl pyruvate (PPA) to phenyl acetic acid (PAA). Required for the formation of floral organs and vascular tissues. Belongs to the set of redundant YUCCA genes probably responsible for auxin biosynthesis in shoots. The chain is Indole-3-pyruvate monooxygenase YUCCA6 (YUC6) from Arabidopsis thaliana (Mouse-ear cress).